The following is a 132-amino-acid chain: Large ribosomal subunit protein bL19 (132 aa).

This sequence belongs to the bacterial ribosomal protein bL19 family.

This protein is located at the 30S-50S ribosomal subunit interface and may play a role in the structure and function of the aminoacyl-tRNA binding site. In Persephonella marina (strain DSM 14350 / EX-H1), this protein is Large ribosomal subunit protein bL19.